Here is a 137-residue protein sequence, read N- to C-terminus: Peptide methionine sulfoxide reductase MsrB (137 aa).

The 123-residue stretch at Ala7–Gly129 folds into the MsrB domain. Positions 46, 49, 95, and 98 each coordinate Zn(2+). Cys118 acts as the Nucleophile in catalysis.

It belongs to the MsrB Met sulfoxide reductase family. The cofactor is Zn(2+).

The enzyme catalyses L-methionyl-[protein] + [thioredoxin]-disulfide + H2O = L-methionyl-(R)-S-oxide-[protein] + [thioredoxin]-dithiol. The protein is Peptide methionine sulfoxide reductase MsrB of Shigella dysenteriae serotype 1 (strain Sd197).